Here is a 213-residue protein sequence, read N- to C-terminus: FMN-dependent NADH:quinone oxidoreductase (213 aa).

Belongs to the azoreductase type 1 family. As to quaternary structure, homodimer. Requires FMN as cofactor.

It catalyses the reaction 2 a quinone + NADH + H(+) = 2 a 1,4-benzosemiquinone + NAD(+). The catalysed reaction is N,N-dimethyl-1,4-phenylenediamine + anthranilate + 2 NAD(+) = 2-(4-dimethylaminophenyl)diazenylbenzoate + 2 NADH + 2 H(+). Quinone reductase that provides resistance to thiol-specific stress caused by electrophilic quinones. Its function is as follows. Also exhibits azoreductase activity. Catalyzes the reductive cleavage of the azo bond in aromatic azo compounds to the corresponding amines. The sequence is that of FMN-dependent NADH:quinone oxidoreductase from Streptococcus agalactiae serotype III (strain NEM316).